Reading from the N-terminus, the 125-residue chain is Small ribosomal subunit protein uS12 (125 aa).

A 3-methylthioaspartic acid modification is found at Asp89. Residues 106-125 (GVKDRKQSRSKYGAKRPKKA) form a disordered region. Over residues 113–125 (SRSKYGAKRPKKA) the composition is skewed to basic residues.

The protein belongs to the universal ribosomal protein uS12 family. As to quaternary structure, part of the 30S ribosomal subunit. Contacts proteins S8 and S17. May interact with IF1 in the 30S initiation complex.

With S4 and S5 plays an important role in translational accuracy. In terms of biological role, interacts with and stabilizes bases of the 16S rRNA that are involved in tRNA selection in the A site and with the mRNA backbone. Located at the interface of the 30S and 50S subunits, it traverses the body of the 30S subunit contacting proteins on the other side and probably holding the rRNA structure together. The combined cluster of proteins S8, S12 and S17 appears to hold together the shoulder and platform of the 30S subunit. The protein is Small ribosomal subunit protein uS12 of Azoarcus sp. (strain BH72).